The chain runs to 98 residues: Large ribosomal subunit protein eL21 (98 aa).

Basic residues predominate over residues 1–17; sequence MQRSRGFRSKSRRKMTK. Residues 1–28 are disordered; the sequence is MQRSRGFRSKSRRKMTKVVREGRSNPIT.

This sequence belongs to the eukaryotic ribosomal protein eL21 family.

The sequence is that of Large ribosomal subunit protein eL21 from Methanobrevibacter smithii (strain ATCC 35061 / DSM 861 / OCM 144 / PS).